The chain runs to 96 residues: MNIRPLHDRVIVERQEVESKSAGGIVLTGSAAEKSTRGTVLAVGKGRILENGTVQPLDVKVGDSVIFAEGYGTKSEKIDGKEVLIMSENDIMAIVE.

The protein belongs to the GroES chaperonin family. Heptamer of 7 subunits arranged in a ring. Interacts with the chaperonin GroEL.

Its subcellular location is the cytoplasm. Together with the chaperonin GroEL, plays an essential role in assisting protein folding. The GroEL-GroES system forms a nano-cage that allows encapsulation of the non-native substrate proteins and provides a physical environment optimized to promote and accelerate protein folding. GroES binds to the apical surface of the GroEL ring, thereby capping the opening of the GroEL channel. The chain is Co-chaperonin GroES from Aliivibrio fischeri (strain ATCC 700601 / ES114) (Vibrio fischeri).